Here is a 928-residue protein sequence, read N- to C-terminus: DNA mismatch repair protein MutS (928 aa).

ATP is bound at residue 613-620 (GPNMAGKS). The segment covering 854–872 (KAKSNKDDHRIDEKTENSS) has biased composition (basic and acidic residues). Residues 854-880 (KAKSNKDDHRIDEKTENSSKKHKNKDS) form a disordered region.

The protein belongs to the DNA mismatch repair MutS family.

This protein is involved in the repair of mismatches in DNA. It is possible that it carries out the mismatch recognition step. This protein has a weak ATPase activity. The chain is DNA mismatch repair protein MutS from Clostridium beijerinckii (strain ATCC 51743 / NCIMB 8052) (Clostridium acetobutylicum).